The primary structure comprises 370 residues: Phospho-N-acetylmuramoyl-pentapeptide-transferase (370 aa).

10 consecutive transmembrane segments (helical) span residues 24-44 (YLTF…VAMG), 78-98 (TMGG…WADL), 103-123 (VWVV…DDYA), 138-158 (KLVA…LFAP), 177-197 (ALVI…IAGF), 209-229 (GLAI…AYLV), 245-265 (GVGE…GFLW), 273-293 (IFMG…IAVC), 298-318 (LVLG…MIQV), and 347-367 (TVVI…LATL).

This sequence belongs to the glycosyltransferase 4 family. MraY subfamily. Mg(2+) serves as cofactor.

Its subcellular location is the cell inner membrane. It carries out the reaction UDP-N-acetyl-alpha-D-muramoyl-L-alanyl-gamma-D-glutamyl-meso-2,6-diaminopimeloyl-D-alanyl-D-alanine + di-trans,octa-cis-undecaprenyl phosphate = di-trans,octa-cis-undecaprenyl diphospho-N-acetyl-alpha-D-muramoyl-L-alanyl-D-glutamyl-meso-2,6-diaminopimeloyl-D-alanyl-D-alanine + UMP. The protein operates within cell wall biogenesis; peptidoglycan biosynthesis. Functionally, catalyzes the initial step of the lipid cycle reactions in the biosynthesis of the cell wall peptidoglycan: transfers peptidoglycan precursor phospho-MurNAc-pentapeptide from UDP-MurNAc-pentapeptide onto the lipid carrier undecaprenyl phosphate, yielding undecaprenyl-pyrophosphoryl-MurNAc-pentapeptide, known as lipid I. This Caulobacter vibrioides (strain NA1000 / CB15N) (Caulobacter crescentus) protein is Phospho-N-acetylmuramoyl-pentapeptide-transferase.